A 146-amino-acid chain; its full sequence is D-aminoacyl-tRNA deacylase (146 aa).

A Gly-cisPro motif, important for rejection of L-amino acids motif is present at residues 138 to 139; it reads GP.

It belongs to the DTD family. Homodimer.

It localises to the cytoplasm. It carries out the reaction glycyl-tRNA(Ala) + H2O = tRNA(Ala) + glycine + H(+). The catalysed reaction is a D-aminoacyl-tRNA + H2O = a tRNA + a D-alpha-amino acid + H(+). An aminoacyl-tRNA editing enzyme that deacylates mischarged D-aminoacyl-tRNAs. Also deacylates mischarged glycyl-tRNA(Ala), protecting cells against glycine mischarging by AlaRS. Acts via tRNA-based rather than protein-based catalysis; rejects L-amino acids rather than detecting D-amino acids in the active site. By recycling D-aminoacyl-tRNA to D-amino acids and free tRNA molecules, this enzyme counteracts the toxicity associated with the formation of D-aminoacyl-tRNA entities in vivo and helps enforce protein L-homochirality. The polypeptide is D-aminoacyl-tRNA deacylase (Xanthomonas oryzae pv. oryzae (strain MAFF 311018)).